The sequence spans 748 residues: Acyl-coenzyme A oxidase (748 aa).

Belongs to the acyl-CoA oxidase family. Homooctamer. It depends on FAD as a cofactor.

The protein localises to the peroxisome. The enzyme catalyses a 2,3-saturated acyl-CoA + O2 = a (2E)-enoyl-CoA + H2O2. It functions in the pathway lipid metabolism; peroxisomal fatty acid beta-oxidation. This chain is Acyl-coenzyme A oxidase (POX1), found in Saccharomyces cerevisiae (strain ATCC 204508 / S288c) (Baker's yeast).